Here is a 743-residue protein sequence, read N- to C-terminus: Threonine synthase-like 1 (743 aa).

Residue K281 is modified to N6-acetyllysine. At K351 the chain carries N6-(pyridoxal phosphate)lysine.

The protein belongs to the threonine synthase family. It depends on pyridoxal 5'-phosphate as a cofactor.

This is Threonine synthase-like 1 (THNSL1) from Macaca fascicularis (Crab-eating macaque).